Consider the following 73-residue polypeptide: UPF0235 protein SYO3AOP1_0257 (73 aa).

Belongs to the UPF0235 family.

This Sulfurihydrogenibium sp. (strain YO3AOP1) protein is UPF0235 protein SYO3AOP1_0257.